The chain runs to 225 residues: Cyanamide hydratase DDI2 (225 aa).

The 111-residue stretch at 52–162 (VLNHSLRVFQ…LQIATTLDNV (111 aa)) folds into the HD domain.

Belongs to the cyanamide dehydrase family. Homohexamer. Zn(2+) is required as a cofactor.

It catalyses the reaction urea = cyanamide + H2O. Cyanamide hydratase involved in the detoxification and/or utilization of cyanamide, a toxic nitrile compound distributed widely in the environment. In Saccharomyces cerevisiae (strain ATCC 204508 / S288c) (Baker's yeast), this protein is Cyanamide hydratase DDI2.